The sequence spans 364 residues: Histidinol-phosphate aminotransferase (364 aa).

Residue Lys-226 is modified to N6-(pyridoxal phosphate)lysine.

This sequence belongs to the class-II pyridoxal-phosphate-dependent aminotransferase family. Histidinol-phosphate aminotransferase subfamily. Homodimer. Requires pyridoxal 5'-phosphate as cofactor.

The catalysed reaction is L-histidinol phosphate + 2-oxoglutarate = 3-(imidazol-4-yl)-2-oxopropyl phosphate + L-glutamate. The protein operates within amino-acid biosynthesis; L-histidine biosynthesis; L-histidine from 5-phospho-alpha-D-ribose 1-diphosphate: step 7/9. The sequence is that of Histidinol-phosphate aminotransferase from Sulfurimonas denitrificans (strain ATCC 33889 / DSM 1251) (Thiomicrospira denitrificans (strain ATCC 33889 / DSM 1251)).